The chain runs to 567 residues: Proline--tRNA ligase (567 aa).

Belongs to the class-II aminoacyl-tRNA synthetase family. ProS type 1 subfamily. As to quaternary structure, homodimer.

The protein localises to the cytoplasm. The catalysed reaction is tRNA(Pro) + L-proline + ATP = L-prolyl-tRNA(Pro) + AMP + diphosphate. Catalyzes the attachment of proline to tRNA(Pro) in a two-step reaction: proline is first activated by ATP to form Pro-AMP and then transferred to the acceptor end of tRNA(Pro). As ProRS can inadvertently accommodate and process non-cognate amino acids such as alanine and cysteine, to avoid such errors it has two additional distinct editing activities against alanine. One activity is designated as 'pretransfer' editing and involves the tRNA(Pro)-independent hydrolysis of activated Ala-AMP. The other activity is designated 'posttransfer' editing and involves deacylation of mischarged Ala-tRNA(Pro). The misacylated Cys-tRNA(Pro) is not edited by ProRS. The polypeptide is Proline--tRNA ligase (Geobacillus sp. (strain WCH70)).